Reading from the N-terminus, the 441-residue chain is Enolase (441 aa).

Glutamine 164 serves as a coordination point for (2R)-2-phosphoglycerate. Glutamate 206 serves as the catalytic Proton donor. Positions 243, 289, and 316 each coordinate Mg(2+). The (2R)-2-phosphoglycerate site is built by lysine 341, arginine 370, serine 371, and lysine 392. Lysine 341 (proton acceptor) is an active-site residue.

Belongs to the enolase family. Mg(2+) is required as a cofactor.

Its subcellular location is the cytoplasm. The protein resides in the secreted. It localises to the cell surface. It carries out the reaction (2R)-2-phosphoglycerate = phosphoenolpyruvate + H2O. It functions in the pathway carbohydrate degradation; glycolysis; pyruvate from D-glyceraldehyde 3-phosphate: step 4/5. Functionally, catalyzes the reversible conversion of 2-phosphoglycerate (2-PG) into phosphoenolpyruvate (PEP). It is essential for the degradation of carbohydrates via glycolysis. In Leuconostoc mesenteroides subsp. mesenteroides (strain ATCC 8293 / DSM 20343 / BCRC 11652 / CCM 1803 / JCM 6124 / NCDO 523 / NBRC 100496 / NCIMB 8023 / NCTC 12954 / NRRL B-1118 / 37Y), this protein is Enolase.